Reading from the N-terminus, the 1406-residue chain is DNA topoisomerase 2 (1406 aa).

ATP contacts are provided by residues Asn69, Asn98, 126 to 128 (SSN), and 139 to 146 (GRNGYGAK). Positions 332-334 (KKK) are interaction with DNA. 363-365 (QTK) lines the ATP pocket. The 115-residue stretch at 441-555 (CTLILTEGDS…GLLDIPGFLI (115 aa)) folds into the Toprim domain. Mg(2+)-binding residues include Glu447, Asp524, and Asp526. In terms of domain architecture, Topo IIA-type catalytic spans 690 to 1159 (IPSVLDGFKP…SAKDLWNNDL (470 aa)). Catalysis depends on Tyr780, which acts as the O-(5'-phospho-DNA)-tyrosine intermediate. The segment at 963–972 (KLISPISLQN) is interaction with DNA. Residues 1079–1089 (EDEDEDLEESE) are compositionally biased toward acidic residues. Disordered regions lie at residues 1079-1106 (EDED…VNGP), 1183-1215 (KTKG…KKIK), 1230-1287 (KIKA…DESG), and 1303-1406 (DEDA…FNDE). A compositionally biased stretch (basic and acidic residues) spans 1090–1100 (EATRKKDKDDE). Positions 1204 to 1214 (KKKPARRIKKI) are enriched in basic residues. Over residues 1261-1274 (DVTSNASTPSTTIF) the composition is skewed to polar residues. A compositionally biased stretch (basic residues) spans 1326-1336 (AKKKAPPKRKA). Acidic residues-rich tracts occupy residues 1341 to 1359 (SSED…DEEV) and 1381 to 1406 (EISD…FNDE).

The protein belongs to the type II topoisomerase family. In terms of assembly, homodimer. Mg(2+) serves as cofactor. It depends on Mn(2+) as a cofactor. The cofactor is Ca(2+).

The protein localises to the nucleus. The catalysed reaction is ATP-dependent breakage, passage and rejoining of double-stranded DNA.. Its function is as follows. Control of topological states of DNA by transient breakage and subsequent rejoining of DNA strands. Topoisomerase II makes double-strand breaks. The chain is DNA topoisomerase 2 (TOP2) from Candida glabrata (strain ATCC 2001 / BCRC 20586 / JCM 3761 / NBRC 0622 / NRRL Y-65 / CBS 138) (Yeast).